The following is a 97-amino-acid chain: Putative membrane protein insertion efficiency factor (97 aa).

Residues Val68 to His97 are disordered. Residues Glu72–His97 show a composition bias toward polar residues.

It belongs to the UPF0161 family.

Its subcellular location is the cell inner membrane. Its function is as follows. Could be involved in insertion of integral membrane proteins into the membrane. This Marinobacter nauticus (strain ATCC 700491 / DSM 11845 / VT8) (Marinobacter aquaeolei) protein is Putative membrane protein insertion efficiency factor.